The primary structure comprises 117 residues: uncharacterized protein (117 aa).

Residues 10-32 (VCYLGDIAASGFLNSIATALIAV) form a helical membrane-spanning segment.

The protein resides in the membrane. This is an uncharacterized protein from Rickettsia conorii (strain ATCC VR-613 / Malish 7).